The sequence spans 85 residues: Large ribosomal subunit protein bL27 (85 aa).

Positions 1–22 (MAHKKAGGSTRNGRDSESKRLG) are disordered.

It belongs to the bacterial ribosomal protein bL27 family.

In Teredinibacter turnerae (strain ATCC 39867 / T7901), this protein is Large ribosomal subunit protein bL27.